A 431-amino-acid chain; its full sequence is UDP-N-acetylglucosamine 1-carboxyvinyltransferase (431 aa).

A phosphoenolpyruvate-binding site is contributed by 24–25 (KN). Position 95 (arginine 95) interacts with UDP-N-acetyl-alpha-D-glucosamine. The active-site Proton donor is the aspartate 119. Positions 314 and 336 each coordinate UDP-N-acetyl-alpha-D-glucosamine.

This sequence belongs to the EPSP synthase family. MurA subfamily.

The protein resides in the cytoplasm. The enzyme catalyses phosphoenolpyruvate + UDP-N-acetyl-alpha-D-glucosamine = UDP-N-acetyl-3-O-(1-carboxyvinyl)-alpha-D-glucosamine + phosphate. Its pathway is cell wall biogenesis; peptidoglycan biosynthesis. In terms of biological role, cell wall formation. Adds enolpyruvyl to UDP-N-acetylglucosamine. The polypeptide is UDP-N-acetylglucosamine 1-carboxyvinyltransferase (Bradyrhizobium diazoefficiens (strain JCM 10833 / BCRC 13528 / IAM 13628 / NBRC 14792 / USDA 110)).